The following is a 309-amino-acid chain: MTPSAPSQPVRVAALYRFARLDAFEALRAPLAAFCCGRGIKGTLLLAHEGINGTVAGSEEAIAELIDHIEAIDGLAGLEVKFSSATDMPFHRMKVRLKREIVTMGVEDIDPATSAGTYVAPADWNALISEPGTIVIDTRNTYEVSIGTFKGAVDPATASFREFPAWVEAHRAELEGRKVAMFCTGGIRCEKATAYVKSLGFEDVFHLKGGILKYLEEVPAEQSLWQGECFVFDERVSVSHGLAEGDAELCRACRHPLTASELTSPRYAAGVSCPHCFDARTDEDRQRYAERQRQVELAQARGKRPHIGS.

Positions 129–223 (SEPGTIVIDT…YLEEVPAEQS (95 aa)) constitute a Rhodanese domain. The active-site Cysteine persulfide intermediate is the Cys-183. The tract at residues 288-309 (YAERQRQVELAQARGKRPHIGS) is disordered.

The protein belongs to the TrhO family.

It carries out the reaction uridine(34) in tRNA + AH2 + O2 = 5-hydroxyuridine(34) in tRNA + A + H2O. In terms of biological role, catalyzes oxygen-dependent 5-hydroxyuridine (ho5U) modification at position 34 in tRNAs. The polypeptide is tRNA uridine(34) hydroxylase (Mesorhizobium japonicum (strain LMG 29417 / CECT 9101 / MAFF 303099) (Mesorhizobium loti (strain MAFF 303099))).